Consider the following 572-residue polypeptide: Flagellin B (572 aa).

Belongs to the bacterial flagellin family. In terms of assembly, heteromer of flaA and flaB.

It is found in the secreted. The protein localises to the bacterial flagellum. In terms of biological role, flagellin is the subunit protein which polymerizes to form the filaments of bacterial flagella. The chain is Flagellin B (flaB) from Campylobacter jejuni subsp. jejuni serotype O:2 (strain ATCC 700819 / NCTC 11168).